The sequence spans 216 residues: Phosphorylated carbohydrates phosphatase TM_1254 (216 aa).

Catalysis depends on Asp7, which acts as the Nucleophile.

Belongs to the HAD-like hydrolase superfamily. The cofactor is Co(2+). It depends on Mg(2+) as a cofactor. Mn(2+) serves as cofactor. Ni(2+) is required as a cofactor.

Its function is as follows. Displays high phosphatase activity toward erythrose 4-phosphate, fructose 6-phosphate, 2-deoxyglucose 6-phosphate, and mannose 6-phosphate. May have a role in the intracellular metabolism of many phosphorylated carbohydrates. This Thermotoga maritima (strain ATCC 43589 / DSM 3109 / JCM 10099 / NBRC 100826 / MSB8) protein is Phosphorylated carbohydrates phosphatase TM_1254.